Consider the following 815-residue polypeptide: Patatin-like phospholipase domain-containing protein LELG_00944 (815 aa).

The segment covering 41 to 50 has biased composition (polar residues); the sequence is VSTTAPTTPL. 2 disordered regions span residues 41-105 and 140-166; these read VSTT…PQLK and SENL…STSP. Low complexity predominate over residues 54 to 73; that stretch reads LDMGDLSLLGGELGNGSDDV. Acidic residues predominate over residues 74-94; the sequence is VVGDDDDDDDDDDDDDDDDDD. The span at 148-160 shows a compositional bias: basic residues; that stretch reads KRTKFAKSSKSSK. Residues 185–205 traverse the membrane as a helical segment; the sequence is WPILTFVVIWVTILGFLYLAV. Residues 360–552 enclose the PNPLA domain; sequence LCLSGGACFA…RTDIPIDALN (193 aa). Positions 391 to 395 match the GXSXG motif; it reads GTSGG. Ser393 functions as the Nucleophile in the catalytic mechanism. Asp539 acts as the Proton acceptor in catalysis. The interval 753–815 is disordered; it reads GSTLRDDDAD…LTKERRHTVY (63 aa). The segment covering 759-799 has biased composition (acidic residues); sequence DDADADVDEDDNEDEDEEDEDENDYEEYDVEDLDDPYESDA.

Belongs to the PLPL family.

The protein localises to the membrane. In terms of biological role, probable lipid hydrolase. This is Patatin-like phospholipase domain-containing protein LELG_00944 from Lodderomyces elongisporus (strain ATCC 11503 / CBS 2605 / JCM 1781 / NBRC 1676 / NRRL YB-4239) (Yeast).